A 359-amino-acid chain; its full sequence is N-acetylneuraminate-9-phosphate synthase (359 aa).

An N6-acetyllysine mark is found at Lys61, Lys74, and Lys79. Ser275 carries the phosphoserine modification. Lys290 carries the N6-acetyllysine modification. The AFP-like domain maps to 294-353; it reads SVVAKVKIPAGTTLTLDMLTVKVGEPKGYPPEDIFNLAGKKVLVTIEEDDTVMEESVESH.

As to expression, ubiquitous.

The protein localises to the cytoplasm. It catalyses the reaction aldehydo-N-acetyl-D-mannosamine 6-phosphate + phosphoenolpyruvate + H2O = N-acetylneuraminate 9-phosphate + phosphate. Functionally, catalyzes condensation of phosphoenolpyruvate (PEP) and N-acetylmannosamine 6-phosphate (ManNAc-6-P) to synthesize N-acetylneuraminate-9-phosphate (Neu5Ac-9-P). Neu5Ac-9-P is the phosphorylated forms of sialic acid N-acetylneuraminic acid (Neu5Ac). In contrast with human ortholog, has no detectable activity towards D-mannose 6-phosphate. In Mus musculus (Mouse), this protein is N-acetylneuraminate-9-phosphate synthase.